Consider the following 301-residue polypeptide: Phosphonates import ATP-binding protein PhnC (301 aa).

Residues Ile8 to Ala256 enclose the ABC transporter domain. Residue Gly41–Ser48 coordinates ATP. The disordered stretch occupies residues Ala264 to Ala287.

It belongs to the ABC transporter superfamily. Phosphonates importer (TC 3.A.1.9.1) family. As to quaternary structure, the complex is composed of two ATP-binding proteins (PhnC), two transmembrane proteins (PhnE) and a solute-binding protein (PhnD).

It is found in the cell inner membrane. It catalyses the reaction phosphonate(out) + ATP + H2O = phosphonate(in) + ADP + phosphate + H(+). Its function is as follows. Part of the ABC transporter complex PhnCDE involved in phosphonates import. Responsible for energy coupling to the transport system. This chain is Phosphonates import ATP-binding protein PhnC, found in Paraburkholderia xenovorans (strain LB400).